We begin with the raw amino-acid sequence, 721 residues long: DNA ligase (721 aa).

NAD(+) is bound by residues 42–46, 91–92, and Glu125; these read DAEYD and SL. The active-site N6-AMP-lysine intermediate is Lys127. NAD(+)-binding residues include Arg148, Glu184, Lys300, and Lys324. Residues Cys430, Cys433, Cys448, and Cys454 each coordinate Zn(2+). In terms of domain architecture, BRCT spans 642 to 721; sequence STGSPVEGKT…DAWFTLVGEE (80 aa).

It belongs to the NAD-dependent DNA ligase family. LigA subfamily. Mg(2+) serves as cofactor. Requires Mn(2+) as cofactor.

The catalysed reaction is NAD(+) + (deoxyribonucleotide)n-3'-hydroxyl + 5'-phospho-(deoxyribonucleotide)m = (deoxyribonucleotide)n+m + AMP + beta-nicotinamide D-nucleotide.. Functionally, DNA ligase that catalyzes the formation of phosphodiester linkages between 5'-phosphoryl and 3'-hydroxyl groups in double-stranded DNA using NAD as a coenzyme and as the energy source for the reaction. It is essential for DNA replication and repair of damaged DNA. The polypeptide is DNA ligase (Brucella anthropi (strain ATCC 49188 / DSM 6882 / CCUG 24695 / JCM 21032 / LMG 3331 / NBRC 15819 / NCTC 12168 / Alc 37) (Ochrobactrum anthropi)).